We begin with the raw amino-acid sequence, 396 residues long: Elongation factor Tu (396 aa).

The tr-type G domain maps to lysine 10 to glutamate 206. A G1 region spans residues glycine 19–threonine 26. Glycine 19–threonine 26 serves as a coordination point for GTP. Threonine 26 provides a ligand contact to Mg(2+). Positions glycine 60–asparagine 64 are G2. The tract at residues aspartate 81–glycine 84 is G3. Residues aspartate 81–histidine 85 and asparagine 136–aspartate 139 each bind GTP. Residues asparagine 136–aspartate 139 form a G4 region. The tract at residues serine 174–lysine 176 is G5.

This sequence belongs to the TRAFAC class translation factor GTPase superfamily. Classic translation factor GTPase family. EF-Tu/EF-1A subfamily. In terms of assembly, monomer.

Its subcellular location is the cytoplasm. It carries out the reaction GTP + H2O = GDP + phosphate + H(+). Its function is as follows. GTP hydrolase that promotes the GTP-dependent binding of aminoacyl-tRNA to the A-site of ribosomes during protein biosynthesis. The sequence is that of Elongation factor Tu from Bordetella avium (strain 197N).